Consider the following 392-residue polypeptide: 8-amino-7-oxononanoate synthase (392 aa).

108–109 (GF) is a binding site for pyridoxal 5'-phosphate. Histidine 133 provides a ligand contact to substrate. Pyridoxal 5'-phosphate contacts are provided by residues serine 180, 205–208 (DDAH), and 236–239 (TLSK). Residue lysine 239 is modified to N6-(pyridoxal phosphate)lysine. A substrate-binding site is contributed by threonine 353.

It belongs to the class-II pyridoxal-phosphate-dependent aminotransferase family. BioF subfamily. In terms of assembly, homodimer. Requires pyridoxal 5'-phosphate as cofactor.

It catalyses the reaction 6-carboxyhexanoyl-[ACP] + L-alanine + H(+) = (8S)-8-amino-7-oxononanoate + holo-[ACP] + CO2. It participates in cofactor biosynthesis; biotin biosynthesis. In terms of biological role, catalyzes the decarboxylative condensation of pimeloyl-[acyl-carrier protein] and L-alanine to produce 8-amino-7-oxononanoate (AON), [acyl-carrier protein], and carbon dioxide. This is 8-amino-7-oxononanoate synthase from Bacillus pumilus (strain SAFR-032).